A 644-amino-acid polypeptide reads, in one-letter code: Alkyldihydroxyacetonephosphate synthase, peroxisomal (644 aa).

Residues 1-44 (MAEAAGEAGASERDPDAVRARRRLRVLSGHLLGRPQEAPSTNEC) constitute a peroxisome transit peptide. A disordered region spans residues 1–70 (MAEAAGEAGA…PAAPESGTIP (70 aa)). Residues 10–19 (ASERDPDAVR) show a composition bias toward basic and acidic residues. The segment covering 49-64 (AASAAGASPAASPAAP) has biased composition (low complexity). Phosphoserine occurs at positions 51 and 56. Lys88 is subject to N6-acetyllysine. The region spanning 188–370 (FERIPDIVVW…TEATIKIRPT (183 aa)) is the FAD-binding PCMH-type domain. Residues 220–226 (PIGGGTS), 289–295 (DSLEFSI), and 302–305 (TRAS) each bind FAD. Lys333 bears the N6-acetyllysine mark. 354–360 (EGTLGVI) is a binding site for FAD. Substrate is bound at residue Arg501. Tyr564 functions as the Proton donor/acceptor in the catalytic mechanism. Important for enzyme activity regions lie at residues 601–603 (HHH) and 640–644 (NRNLL).

Belongs to the FAD-binding oxidoreductase/transferase type 4 family. In terms of assembly, homodimer. Requires FAD as cofactor.

Its subcellular location is the peroxisome membrane. The protein resides in the peroxisome. It carries out the reaction a long chain fatty alcohol + a 1-acylglycerone 3-phosphate = a 1-O-alkylglycerone 3-phosphate + a long-chain fatty acid + H(+). It catalyses the reaction hexadecan-1-ol + 1-hexadecanoylglycerone 3-phosphate = 1-O-hexadecylglycerone 3-phosphate + hexadecanoate + H(+). The enzyme catalyses 1-hexadecanoylglycerone 3-phosphate + a long-chain fatty acid = a 1-acylglycerone 3-phosphate + hexadecanoate. Its pathway is glycerolipid metabolism; ether lipid biosynthesis. Its activity is regulated as follows. Inhibited by divalent cation Mg(2+). Its function is as follows. Catalyzes the exchange of the acyl chain in acyl-dihydroxyacetonephosphate (acyl-DHAP) for a long chain fatty alcohol, yielding the first ether linked intermediate, i.e. alkyl-dihydroxyacetonephosphate (alkyl-DHAP), in the pathway of ether lipid biosynthesis. This is Alkyldihydroxyacetonephosphate synthase, peroxisomal (Agps) from Rattus norvegicus (Rat).